We begin with the raw amino-acid sequence, 196 residues long: Probable GTP-binding protein EngB (196 aa).

In terms of domain architecture, EngB-type G spans aspartate 21–serine 195. GTP is bound by residues glycine 29 to serine 36, glycine 56 to leucine 60, aspartate 75 to glycine 78, threonine 142 to aspartate 145, and isoleucine 174 to asparagine 176. Positions 36 and 58 each coordinate Mg(2+).

This sequence belongs to the TRAFAC class TrmE-Era-EngA-EngB-Septin-like GTPase superfamily. EngB GTPase family. It depends on Mg(2+) as a cofactor.

Its function is as follows. Necessary for normal cell division and for the maintenance of normal septation. The polypeptide is Probable GTP-binding protein EngB (Mycoplasma mycoides subsp. mycoides SC (strain CCUG 32753 / NCTC 10114 / PG1)).